The primary structure comprises 89 residues: Small ribosomal subunit protein bS18 (89 aa).

It belongs to the bacterial ribosomal protein bS18 family. As to quaternary structure, part of the 30S ribosomal subunit. Forms a tight heterodimer with protein bS6.

Functionally, binds as a heterodimer with protein bS6 to the central domain of the 16S rRNA, where it helps stabilize the platform of the 30S subunit. In Bdellovibrio bacteriovorus (strain ATCC 15356 / DSM 50701 / NCIMB 9529 / HD100), this protein is Small ribosomal subunit protein bS18.